Reading from the N-terminus, the 301-residue chain is Probable alpha-L-glutamate ligase (301 aa).

The ATP-grasp domain occupies 104 to 287 (LQLLSRRGVG…IASQIIAFIE (184 aa)). Residues K141, 178–179 (EF), D187, and 211–213 (RSN) each bind ATP. Mg(2+) contacts are provided by D248, E260, and N262. Positions 248, 260, and 262 each coordinate Mn(2+).

The protein belongs to the RimK family. The cofactor is Mg(2+). Mn(2+) serves as cofactor.

The sequence is that of Probable alpha-L-glutamate ligase from Hydrogenovibrio crunogenus (strain DSM 25203 / XCL-2) (Thiomicrospira crunogena).